Reading from the N-terminus, the 229-residue chain is Enolase-phosphatase E1 (229 aa).

The Mg(2+) site is built by Asp7 and Glu9. Substrate is bound by residues 122–123 (SS) and Lys161. Residue Asp186 participates in Mg(2+) binding.

This sequence belongs to the HAD-like hydrolase superfamily. MasA/MtnC family. As to quaternary structure, monomer. Requires Mg(2+) as cofactor.

It localises to the cytoplasm. The protein localises to the nucleus. The enzyme catalyses 5-methylsulfanyl-2,3-dioxopentyl phosphate + H2O = 1,2-dihydroxy-5-(methylsulfanyl)pent-1-en-3-one + phosphate. The protein operates within amino-acid biosynthesis; L-methionine biosynthesis via salvage pathway; L-methionine from S-methyl-5-thio-alpha-D-ribose 1-phosphate: step 3/6. It participates in amino-acid biosynthesis; L-methionine biosynthesis via salvage pathway; L-methionine from S-methyl-5-thio-alpha-D-ribose 1-phosphate: step 4/6. Functionally, bifunctional enzyme that catalyzes the enolization of 2,3-diketo-5-methylthiopentyl-1-phosphate (DK-MTP-1-P) into the intermediate 2-hydroxy-3-keto-5-methylthiopentenyl-1-phosphate (HK-MTPenyl-1-P), which is then dephosphorylated to form the acireductone 1,2-dihydroxy-3-keto-5-methylthiopentene (DHK-MTPene). This chain is Enolase-phosphatase E1, found in Clavispora lusitaniae (strain ATCC 42720) (Yeast).